The primary structure comprises 387 residues: Probable purine permease 6 (387 aa).

Residues methionine 1 to serine 24 are disordered. A compositionally biased stretch (basic and acidic residues) spans glutamine 9–serine 24. 10 consecutive transmembrane segments (helical) span residues leucine 36–glycine 56, tryptophan 68–leucine 88, phenylalanine 106–leucine 126, phenylalanine 129–phenylalanine 149, isoleucine 162–isoleucine 182, tyrosine 201–leucine 221, isoleucine 238–phenylalanine 258, isoleucine 283–isoleucine 303, phenylalanine 309–phenylalanine 329, and methionine 333–tyrosine 353. The interval proline 362–alanine 387 is disordered. Over residues glutamine 370 to aspartate 381 the composition is skewed to basic and acidic residues.

This sequence belongs to the purine permeases (TC 2.A.7.14) family.

The protein localises to the membrane. This is Probable purine permease 6 (PUP6) from Arabidopsis thaliana (Mouse-ear cress).